The sequence spans 304 residues: D-alanine--D-alanine ligase (304 aa).

The ATP-grasp domain occupies 100–301 (KLVALQSGIP…FGEFLEDLIK (202 aa)). 129 to 184 (ERKLGSPFIVKPCDVGSTIGLSLVRSASEYEVALEEAFRFSDRLLLEEFIDGFEVT) is a binding site for ATP. Aspartate 256, glutamate 268, and asparagine 270 together coordinate Mg(2+).

Belongs to the D-alanine--D-alanine ligase family. The cofactor is Mg(2+). Requires Mn(2+) as cofactor.

The protein localises to the cytoplasm. The catalysed reaction is 2 D-alanine + ATP = D-alanyl-D-alanine + ADP + phosphate + H(+). It functions in the pathway cell wall biogenesis; peptidoglycan biosynthesis. In terms of biological role, cell wall formation. This chain is D-alanine--D-alanine ligase, found in Coprothermobacter proteolyticus (strain ATCC 35245 / DSM 5265 / OCM 4 / BT).